The following is a 472-amino-acid chain: MNVTSLFSFTSPAVKRLLGWKQGDEEEKWAEKAVDALVKKLKKKKGAMEELERALSCPGQPSNCVTIPRSLDGRLQVSHRKGLPHVIYCRVWRWPDLQSHHELKALECCEFPFGSKQKDVCINPYHYKRVDSPVLPPVLVPRNSEFNAKLSMLPRFRNPLHQTEPPMPQNATFPDSFPQQPANALPFTPNSPTNSYPSSPNSGTGSTATFPHSPSSSDPGSPFQMPETPPPAYMPPEEPMTQDCPQPMDTNLLAPNLPLEISNRTDVHPVAYQEPKHWCSIVYYELNNRVGEAFLASSTSVLVDGFTDPSNNRNRFCLGLLSNVNRNSTIENTRRHIGKGVHLYYVGGEVYAECLSDSSIFVQSRNCNYHHGFHPTTVCKIPSRCSLKIFNNQEFAELLAQSVNHGFEAVYELTKMCTIRMSFVKGWGAKYHRQDVTSTPCWIEIHLHGPLQWLDKVLTQMGSPHNPISSVS.

In terms of domain architecture, MH1 spans 12 to 136 (PAVKRLLGWK…YKRVDSPVLP (125 aa)). Residues Cys-64, Cys-109, Cys-121, and His-126 each contribute to the Zn(2+) site. Positions 158-238 (NPLHQTEPPM…PPPAYMPPEE (81 aa)) are disordered. The span at 169-182 (QNATFPDSFPQQPA) shows a compositional bias: polar residues. Positions 188-226 (TPNSPTNSYPSSPNSGTGSTATFPHSPSSSDPGSPFQMP) are enriched in low complexity. Over residues 227-238 (ETPPPAYMPPEE) the composition is skewed to pro residues. The 195-residue stretch at 278–472 (WCSIVYYELN…SPHNPISSVS (195 aa)) folds into the MH2 domain.

Belongs to the dwarfin/SMAD family. May form trimers with another Smad1 and the co-Smad Smad4.

The protein resides in the cytoplasm. It localises to the nucleus. In terms of biological role, involved in ventralization. May mediate Bmp2b signaling during embryonic dorsal-ventral pattern formation, and may itself be a transcriptional target for Smad5-mediated Bmp2b signaling. This chain is Mothers against decapentaplegic homolog 1 (smad1), found in Danio rerio (Zebrafish).